A 541-amino-acid polypeptide reads, in one-letter code: Membrane protein insertase YidC (541 aa).

6 helical membrane passes run 6–26 (NILL…WQAD), 325–345 (LVVD…LLMF), 349–369 (FVGN…GLLF), 420–440 (GGCL…WVLL), 457–477 (LSVQ…MFIM), and 500–520 (VIFT…WLVG).

The protein belongs to the OXA1/ALB3/YidC family. Type 1 subfamily. In terms of assembly, interacts with the Sec translocase complex via SecD. Specifically interacts with transmembrane segments of nascent integral membrane proteins during membrane integration.

It localises to the cell inner membrane. Its function is as follows. Required for the insertion and/or proper folding and/or complex formation of integral membrane proteins into the membrane. Involved in integration of membrane proteins that insert both dependently and independently of the Sec translocase complex, as well as at least some lipoproteins. Aids folding of multispanning membrane proteins. This is Membrane protein insertase YidC from Shewanella sp. (strain W3-18-1).